A 328-amino-acid chain; its full sequence is Mitochondrial GTPase 1 (328 aa).

Residues 10 to 199 (KTTLKRLRDS…MVDTPGIMLP (190 aa)) form the CP-type G domain. GTP-binding positions include 57–60 (NKCD), 143–148 (NVGKSS), and Gly-195.

This sequence belongs to the TRAFAC class YlqF/YawG GTPase family. MTG1 subfamily.

The protein resides in the mitochondrion inner membrane. In terms of biological role, mitochondrial GTPase involved in assembly of the large ribosomal subunit. Plays a role in expression of the mitochondrial translational machinery. This Schizosaccharomyces japonicus (strain yFS275 / FY16936) (Fission yeast) protein is Mitochondrial GTPase 1.